Here is a 486-residue protein sequence, read N- to C-terminus: N-succinylglutamate 5-semialdehyde dehydrogenase (486 aa).

NAD(+) is bound at residue 220 to 225; sequence GSSRTG. Active-site residues include Glu-243 and Cys-277.

This sequence belongs to the aldehyde dehydrogenase family. AstD subfamily.

The enzyme catalyses N-succinyl-L-glutamate 5-semialdehyde + NAD(+) + H2O = N-succinyl-L-glutamate + NADH + 2 H(+). It functions in the pathway amino-acid degradation; L-arginine degradation via AST pathway; L-glutamate and succinate from L-arginine: step 4/5. Its function is as follows. Catalyzes the NAD-dependent reduction of succinylglutamate semialdehyde into succinylglutamate. The sequence is that of N-succinylglutamate 5-semialdehyde dehydrogenase from Shewanella piezotolerans (strain WP3 / JCM 13877).